Consider the following 365-residue polypeptide: tRNA(Met) cytidine acetate ligase (365 aa).

ATP is bound by residues 7–20 (IAEF…HKYL), Gly96, Asn152, and Arg175.

Belongs to the TmcAL family.

The protein resides in the cytoplasm. The enzyme catalyses cytidine(34) in elongator tRNA(Met) + acetate + ATP = N(4)-acetylcytidine(34) in elongator tRNA(Met) + AMP + diphosphate. Functionally, catalyzes the formation of N(4)-acetylcytidine (ac(4)C) at the wobble position of elongator tRNA(Met), using acetate and ATP as substrates. First activates an acetate ion to form acetyladenylate (Ac-AMP) and then transfers the acetyl group to tRNA to form ac(4)C34. This Streptococcus pneumoniae (strain Hungary19A-6) protein is tRNA(Met) cytidine acetate ligase.